A 100-amino-acid polypeptide reads, in one-letter code: MYB-like transcription factor TCL2 (100 aa).

The 38-residue stretch at 37–74 folds into the Myb-like domain; the sequence is TEQEEDLIFRMHRLVGDRWDLIAGRVVGREAKDIERYW.

In terms of assembly, interacts with GL3. Expressed in cotyledons, petioles, rosette leaves, hydathodes, cauline leaves, stems, pedicels and flower buds.

It localises to the nucleus. Functionally, MYB-type transcription factor involved in trichome cell specification. Acts as a negative regulator of trichome patterning and formation. May function by suppressing the expression of GL3. This is MYB-like transcription factor TCL2 (TCL2) from Arabidopsis thaliana (Mouse-ear cress).